Consider the following 341-residue polypeptide: uncharacterized protein (341 aa).

WD repeat units follow at residues 19-59 (SLGS…QVHT), 106-145 (GHTD…RCLG), 252-293 (PFSN…HHKG), and 303-341 (VSQS…ALTS).

The protein localises to the cytoplasm. Its subcellular location is the nucleus. This is an uncharacterized protein from Schizosaccharomyces pombe (strain 972 / ATCC 24843) (Fission yeast).